Here is a 250-residue protein sequence, read N- to C-terminus: AA9 family lytic polysaccharide monooxygenase F (250 aa).

The first 21 residues, 1-21 (MAMSKIATLAGLLASAGLVAG), serve as a signal peptide directing secretion. Residue His-22 coordinates Cu(2+). An O2-binding site is contributed by Asp-51. Cystine bridges form between Cys-77–Cys-200 and Cys-121–Cys-125. His-107 lines the Cu(2+) pocket. Residues His-186 and Gln-195 each coordinate O2. Tyr-197 provides a ligand contact to Cu(2+).

This sequence belongs to the glycosyl hydrolase 61 family. Cu(2+) is required as a cofactor.

The protein resides in the secreted. It carries out the reaction Endohydrolysis of (1-&gt;4)-beta-D-glucosidic linkages in cellulose, lichenin and cereal beta-D-glucans.. In terms of biological role, lytic polysaccharide monooxygenase (LMPO) that depolymerizes crystalline and amorphous polysaccharides via the oxidation of scissile alpha- or beta-(1-4)-glycosidic bonds, yielding C1 or C4 oxidation products. Catalysis by LPMOs requires the reduction of the active-site copper from Cu(II) to Cu(I) by a reducing agent and H(2)O(2) or O(2) as a cosubstrate. Major secreted component of the extracellular cellulolytic system. This is AA9 family lytic polysaccharide monooxygenase F from Emericella nidulans (strain FGSC A4 / ATCC 38163 / CBS 112.46 / NRRL 194 / M139) (Aspergillus nidulans).